We begin with the raw amino-acid sequence, 3262 residues long: Striated muscle-specific serine/threonine-protein kinase (3262 aa).

Residues 1 to 33 (MQKARGTRGEDAGTRAPPSPGVPPKRAKVGAGR) form a disordered region. Position 33 is an omega-N-methylarginine (Arg-33). The Ig-like 1 domain occupies 45–126 (PVFLRPLKNA…GQASCEAVLT (82 aa)). Ser-141 is modified (phosphoserine). 4 disordered regions span residues 155–185 (RAFS…TSEE), 198–226 (EQEA…GPRH), 280–720 (GLHR…VSAG), and 814–875 (LAVR…APPT). Positions 158 to 185 (STPTGGSDTLVGTSLDTPPTSVTGTSEE) are enriched in polar residues. A compositionally biased stretch (pro residues) spans 301–317 (PALPPPSKSALLPPPSP). A phosphoserine mark is found at Ser-368 and Ser-375. Thr-379 is modified (phosphothreonine). Residues Ser-382 and Ser-385 each carry the phosphoserine modification. Residues 404-422 (ILDKLQFFEERRRSLERSD) are compositionally biased toward basic and acidic residues. At Ser-423 the chain carries Phosphoserine. Thr-453 carries the post-translational modification Phosphothreonine. A phosphoserine mark is found at Ser-457, Ser-463, Ser-493, Ser-511, and Ser-531. The segment covering 459 to 473 (EELRSPRGSVAERRR) has biased composition (basic and acidic residues). Residues 510 to 522 (TSREELVRSHESL) are compositionally biased toward basic and acidic residues. Positions 543–552 (RPSTPKTSRA) are enriched in polar residues. At Ser-554 the chain carries Phosphoserine. Basic and acidic residues-rich tracts occupy residues 624-638 (PESR…KREP) and 663-680 (EKNR…RGPE). The 89-residue stretch at 727 to 815 (PVFEIPLQNM…GQATCASSLA (89 aa)) folds into the Ig-like 2 domain. Over residues 820-830 (GSTSPFSSPIT) the composition is skewed to polar residues. Ig-like domains are found at residues 874–963 (PTFK…ARLE), 968–1062 (PESR…ARLT), and 1069–1157 (PLFT…AQLY). Residues Cys-994 and Cys-1046 are joined by a disulfide bond. Phosphoserine occurs at positions 1133 and 1177. Residues 1162-1185 (RTAASGPSSKLEKMPSIPEEPEHG) are disordered. Residues 1193-1283 (PDFLRPLQDL…AACYAHLYVT (91 aa)) form the Ig-like 6 domain. One can recognise a Fibronectin type-III 1 domain in the interval 1290 to 1387 (PDGAPEVVAV…PSEPVQLLEH (98 aa)). 2 Ig-like domains span residues 1389–1485 (PPLE…VTLE) and 1490–1578 (PRFE…AELS). Cys-1413 and Cys-1469 are joined by a disulfide. The region spanning 1606-1859 (YDIHQEIGRG…AEETLEHPWF (254 aa)) is the Protein kinase 1 domain. ATP is bound by residues 1612-1620 (IGRGAFSYL) and Lys-1635. The Proton acceptor role is filled by Asp-1724. Residues 1913–2571 (MPRRQPPSGG…SQPNLSSSVQ (659 aa)) form a disordered region. A compositionally biased stretch (low complexity) spans 1918-1927 (PPSGGLSSSS). A compositionally biased stretch (basic and acidic residues) spans 1980-1990 (EQERTPSKDQE). Residues Ser-1993, Ser-2004, Ser-2019, Ser-2020, and Ser-2042 each carry the phosphoserine modification. A compositionally biased stretch (basic and acidic residues) spans 2009–2019 (SPRRPELRRGS). Residue Arg-2060 is modified to Asymmetric dimethylarginine; alternate. Arg-2060 is modified (omega-N-methylarginine; alternate). A compositionally biased stretch (low complexity) spans 2069–2081 (AQRLQALRQRLLR). Residues Ser-2114 and Ser-2135 each carry the phosphoserine modification. The residue at position 2144 (Arg-2144) is an Omega-N-methylarginine. Residues 2168-2179 (ESPSLSALSETQ) are compositionally biased toward polar residues. Phosphoserine is present on residues Ser-2182 and Ser-2207. The span at 2193-2207 (ITKSPEPSAVTSRDS) shows a compositional bias: polar residues. Over residues 2208–2218 (PQPPEPQPVPE) the composition is skewed to pro residues. Basic and acidic residues predominate over residues 2219–2229 (KVPEPKPEPVR). Over residues 2230 to 2268 (AAKPAQPPLALQMPTQPLTPYAQIMQSLQLSSPTLSPQD) the composition is skewed to low complexity. The segment covering 2337-2348 (FEAKFKRSRESP) has biased composition (basic and acidic residues). Low complexity predominate over residues 2349–2358 (LSRGLRLLSR). The span at 2359–2375 (SRSEERGPFRGAEDDGI) shows a compositional bias: basic and acidic residues. Ser-2379 carries the phosphoserine modification. Thr-2383 carries the phosphothreonine modification. A compositionally biased stretch (basic and acidic residues) spans 2387 to 2398 (LVRRPERSRSVQ). Phosphoserine occurs at positions 2413, 2417, 2441, 2442, 2447, and 2451. Residues 2461 to 2487 (SSTLERLSSRLQRSGSSEDSGGASGRS) are compositionally biased toward low complexity. Residues 2513–2523 (QLGSQTGATTP) show a composition bias toward polar residues. Ser-2524 and Ser-2527 each carry phosphoserine. Residues 2524-2543 (SAESLGSEASGTSGSSAPGE) show a composition bias toward low complexity. Over residues 2546–2557 (SRHRWGLSRLRK) the composition is skewed to basic residues. At Ser-2562 the chain carries Phosphoserine. A compositionally biased stretch (polar residues) spans 2562 to 2571 (SQPNLSSSVQ). An Ig-like 9 domain is found at 2586-2676 (PPVFHIKLKD…GSITSSCTVA (91 aa)). A disulfide bridge connects residues Cys-2608 and Cys-2660. Residues 2683–2777 (KLAPPEVPQT…KVFIRGTPDS (95 aa)) form the Fibronectin type-III 2 domain. 3 disordered regions span residues 2756-2832 (RAGQ…MSAN), 2857-2899 (ATQQ…PAPS), and 2912-2960 (APPA…PQKP). Thr-2774 is modified (phosphothreonine). 2 stretches are compositionally biased toward low complexity: residues 2775–2789 (PDSP…RDAP) and 2803–2831 (PTSL…SMSA). Phosphoserine is present on Ser-2777. The Fibronectin type-III 3 domain occupies 2865 to 2968 (PPSIVVTPSE…KPYTFLEEKA (104 aa)). Over residues 2883–2899 (GTLTPTSSPQGVKPAPS) the composition is skewed to polar residues. Positions 2913–2927 (PPAPQAPAPEPPPEP) are enriched in pro residues. A compositionally biased stretch (polar residues) spans 2943-2953 (SSPTPESTTLR). Ser-2944 carries the phosphoserine modification. A Protein kinase 2 domain is found at 2946 to 3213 (TPESTTLRQG…LQDCLAHPWL (268 aa)). Asp-3080 acts as the Proton acceptor in catalysis.

Belongs to the protein kinase superfamily. CAMK Ser/Thr protein kinase family. In terms of assembly, interacts with MTM1. Isoform 3 is found as a monomer or homodimer. Post-translationally, may be autophosphorylated. In terms of tissue distribution, isoform 1 is preferentially expressed in striated muscle. Non-kinase form such as isoform 3 is predominantly expressed in the aorta. Isoform 3 appears to be expressed only in highly differentiated ASMC in normal vessel walls and down-regulated in dedifferentiated ASMC in vivo. In response to vascular injuries ASMC dedifferentiate and change from a quiescent and contractile phenotype to a proliferative and synthetic phenotype. This proliferation of vascular smooth muscle cells is one of the most prominent features of atherosclerosis. Isoform 1 and isoform 4 are expressed in cardiomyocytes of the developing heart.

It localises to the nucleus. It catalyses the reaction L-seryl-[protein] + ATP = O-phospho-L-seryl-[protein] + ADP + H(+). It carries out the reaction L-threonyl-[protein] + ATP = O-phospho-L-threonyl-[protein] + ADP + H(+). Its function is as follows. Isoform 3 may have a role in regulating the growth and differentiation of arterial smooth muscle cells. This chain is Striated muscle-specific serine/threonine-protein kinase (Speg), found in Mus musculus (Mouse).